We begin with the raw amino-acid sequence, 626 residues long: Janus kinase and microtubule-interacting protein 1 (626 aa).

The disordered stretch occupies residues Met-1–Ala-22. The tract at residues Met-1–Val-365 is mediates association with microtubules. Coiled coils occupy residues Val-19–Arg-255 and Glu-284–Ser-413. Residues Val-365–Met-626 are mediates interaction with TYK2 and GABBR1. The residue at position 382 (Ser-382) is a Phosphoserine. Residues Glu-452–Thr-461 are compositionally biased toward polar residues. The disordered stretch occupies residues Glu-452 to Asp-477. Phosphothreonine is present on Thr-470. Positions Gln-490–Arg-604 form a coiled coil.

It belongs to the JAKMIP family. As to quaternary structure, homodimer. Forms a complex with GABBR1 and KIF5B/kinesin-1. Interacts with JAK1 and TYK2. Predominantly expressed in neural tissues and lymphoid cells (at protein level). Isoform 2, isoform 3 and isoform 4 are specifically expressed in brain and retina. Isoform 1 and isoform 5 are also detected in liver, lung and skeletal muscle. Also detected in testis and to a lower extent spleen and intestine.

It localises to the cytoplasm. The protein resides in the cytoskeleton. The protein localises to the membrane. Its function is as follows. Associates with microtubules and may play a role in the microtubule-dependent transport of the GABA-B receptor. May play a role in JAK1 signaling and regulate microtubule cytoskeleton rearrangements. In Homo sapiens (Human), this protein is Janus kinase and microtubule-interacting protein 1 (JAKMIP1).